The following is a 276-amino-acid chain: Glutamate racemase (276 aa).

Residues 10–11 (DS) and 42–43 (YG) contribute to the substrate site. Cys-73 functions as the Proton donor/acceptor in the catalytic mechanism. A substrate-binding site is contributed by 74 to 75 (NS). Cys-183 (proton donor/acceptor) is an active-site residue. 184 to 185 (TH) contacts substrate.

The protein belongs to the aspartate/glutamate racemases family.

The catalysed reaction is L-glutamate = D-glutamate. Its pathway is cell wall biogenesis; peptidoglycan biosynthesis. Its function is as follows. Provides the (R)-glutamate required for cell wall biosynthesis. The polypeptide is Glutamate racemase (Parafrankia sp. (strain EAN1pec)).